The chain runs to 341 residues: Type II methyltransferase M.NgoPII (341 aa).

Residues 12–341 (MKIISLFSGC…AAAIKKTLER (330 aa)) enclose the SAM-dependent MTase C5-type domain. C84 is an active-site residue.

It belongs to the class I-like SAM-binding methyltransferase superfamily. C5-methyltransferase family.

It carries out the reaction a 2'-deoxycytidine in DNA + S-adenosyl-L-methionine = a 5-methyl-2'-deoxycytidine in DNA + S-adenosyl-L-homocysteine + H(+). Functionally, a methylase that recognizes the double-stranded sequence 5'-GGCC-3', methylates C-3 on both strands, and protects the DNA from cleavage by the NgoPII endonuclease. The polypeptide is Type II methyltransferase M.NgoPII (ngoPIIM) (Neisseria gonorrhoeae).